A 729-amino-acid polypeptide reads, in one-letter code: MLYKGDTLYLDWLEDGIAELVFDAPGSVNKLDTATVASLGEAIGVLEQQSDLKGLLLRSNKAAFIVGADITEFLSLFLVPEEQLSQWLHFANSVFNRLEDLPVPTIAAVNGYALGGGCECVLATDYRLATPDLRIGLPETKLGIMPGFGGSVRMPRMLGADSALEIIAAGKDVGADQALKIGLVDGVVKAEKLVEGAMAILRQAINGDLDWKAKRQPKLEPLKLSKIEAAMSFTIAKGMVAQTAGKHYPAPITAVKTIEAAARFGREEALNLENKSFVPLAHTNEARALVGIFLNDQYVKGKAKKLTKDVETPKQAAVLGAGIMGGGIAYQSAWKGVPVVMKDINDKSLTLGMTEAAKLLNKQLERGKIDGLKLAGVISTIHPTLDYAGFDRVDVVVEAVVENPKVKKAVLAETEQKVRPDTVLASNTSTIPISELANALERPENFCGMHFFNPVHRMPLVEIIRGEKSSDETIAKVVAWASKMGKTPIVVNDCPGFFVNRVLFPYFAGFSQLLRDGADFRKIDKVMEKQFGWPMGPAYLLDVVGIDTAHHAQAVMAAGFPQRMQKDYRDAIDALFNANRFGQKNGLGFWRYKEDSKGKPKKEEDVVVDDLLAKVSQPKRDFSEEEIIARMMIPMVNEVVRCLEEGIIATPAEADMALVYGLGFPPFHGGAFRWLDTLGSAKYLDMAQQYQHLGPLYEVPEGMRNKARHNEPYYPPVEPARPVGDLKTA.

The enoyl-CoA hydratase/isomerase stretch occupies residues 1–189 (MLYKGDTLYL…KIGLVDGVVK (189 aa)). Substrate is bound at residue D296. Residues 311-729 (ETPKQAAVLG…ARPVGDLKTA (419 aa)) are 3-hydroxyacyl-CoA dehydrogenase. NAD(+) contacts are provided by residues M324, D343, 400–402 (VVE), K407, and S429. Residue H450 is the For 3-hydroxyacyl-CoA dehydrogenase activity of the active site. Residue N453 participates in NAD(+) binding. 2 residues coordinate substrate: N500 and Y660. The tract at residues 707-729 (ARHNEPYYPPVEPARPVGDLKTA) is disordered.

This sequence in the N-terminal section; belongs to the enoyl-CoA hydratase/isomerase family. It in the C-terminal section; belongs to the 3-hydroxyacyl-CoA dehydrogenase family. In terms of assembly, heterotetramer of two alpha chains (FadB) and two beta chains (FadA).

It carries out the reaction a (3S)-3-hydroxyacyl-CoA + NAD(+) = a 3-oxoacyl-CoA + NADH + H(+). The catalysed reaction is a (3S)-3-hydroxyacyl-CoA = a (2E)-enoyl-CoA + H2O. The enzyme catalyses a 4-saturated-(3S)-3-hydroxyacyl-CoA = a (3E)-enoyl-CoA + H2O. It catalyses the reaction (3S)-3-hydroxybutanoyl-CoA = (3R)-3-hydroxybutanoyl-CoA. It carries out the reaction a (3Z)-enoyl-CoA = a 4-saturated (2E)-enoyl-CoA. The catalysed reaction is a (3E)-enoyl-CoA = a 4-saturated (2E)-enoyl-CoA. It functions in the pathway lipid metabolism; fatty acid beta-oxidation. In terms of biological role, involved in the aerobic and anaerobic degradation of long-chain fatty acids via beta-oxidation cycle. Catalyzes the formation of 3-oxoacyl-CoA from enoyl-CoA via L-3-hydroxyacyl-CoA. It can also use D-3-hydroxyacyl-CoA and cis-3-enoyl-CoA as substrate. The chain is Fatty acid oxidation complex subunit alpha from Escherichia coli O6:K15:H31 (strain 536 / UPEC).